The sequence spans 597 residues: Chaperonin 60 subunit beta 3, chloroplastic (597 aa).

Residues 1-20 (MASTFSATSSMGSSLAPPSN) are disordered. The transit peptide at 1-29 (MASTFSATSSMGSSLAPPSNRLSSFVSIS) directs the protein to the chloroplast. 2 positions are modified to phosphoserine: Ser97 and Ser474. Residues 387-489 (STEEVVKKRV…KETLANDEEK (103 aa)) adopt a coiled-coil conformation.

This sequence belongs to the chaperonin (HSP60) family. Part of the Cpn60 complex composed of 7 alpha and 7 beta subunits. Can also form a complex composed of 14 beta subunits only. Both complexes show ATPase activity. The Cpn60 complex interacts with the Cpn10 complex.

Its subcellular location is the plastid. The protein resides in the chloroplast. Its function is as follows. Involved in protein assisted folding. This Arabidopsis thaliana (Mouse-ear cress) protein is Chaperonin 60 subunit beta 3, chloroplastic (CPN60B3).